Consider the following 522-residue polypeptide: Nuclear pore glycoprotein p62 (522 aa).

At Ser-2 the chain carries N-acetylserine. 5 tandem repeats follow at residues 6–7 (FG), 44–45 (FG), 76–77 (FG), 114–115 (FG), and 142–143 (FG). The tract at residues 6-143 (FGGTGAPTGG…GTAPTGFVFG (138 aa)) is 5 X 2 AA repeats of F-G. The span at 169–179 (SGFNIGSAGNS) shows a compositional bias: polar residues. Disordered regions lie at residues 169–215 (SGFN…ATIT) and 260–288 (APGAASGTSTTTSTAATATATTTSSSSTT). Low complexity-rich tracts occupy residues 180–215 (AQPTAPATLPFTPATPAATTAGATQPAAPTPTATIT) and 262–288 (GAASGTSTTTSTAATATATTTSSSSTT). The segment at 328 to 458 (MTYAQLESLI…QDLKDIIEHL (131 aa)) is required for centrosome localization. A coiled-coil region spans residues 328–458 (MTYAQLESLI…QDLKDIIEHL (131 aa)). Thr-373 carries an O-linked (GlcNAc) threonine glycan. Phosphoserine is present on residues Ser-408 and Ser-418. An O-linked (GlcNAc) serine glycan is attached at Ser-468.

This sequence belongs to the nucleoporin NSP1/NUP62 family. As to quaternary structure, component of the p62 complex, a complex at least composed of NUP62, NUP54, and NUP58. Interacts with NUP88. Interacts with NUTF2. Interacts with HIKESHI. Interacts with OSBPL8. Interacts with CAPG. Interacts with SAS6 and TUBG1 at the centrosome. Interacts with MCM3AP isoform GANP. (Microbial infection) Interacts with Epstein-barr virus BGLF4; this interaction allows BGLF4 nuclear entry. O-glycosylated. Contains about 10 N-acetylglucosamine side chain sites predicted for the entire protein, among which only one in the C-terminal. Post-translationally, the inner channel of the NPC has a different redox environment from the cytoplasm and allows the formation of interchain disulfide bonds between some nucleoporins, the significant increase of these linkages upon oxidative stress reduces the permeability of the NPC.

The protein resides in the nucleus. Its subcellular location is the nuclear pore complex. It is found in the cytoplasm. The protein localises to the cytoskeleton. It localises to the spindle pole. The protein resides in the nucleus envelope. Its subcellular location is the microtubule organizing center. It is found in the centrosome. Its function is as follows. Essential component of the nuclear pore complex. The N-terminal is probably involved in nucleocytoplasmic transport. The C-terminal is involved in protein-protein interaction probably via coiled-coil formation, promotes its association with centrosomes and may function in anchorage of p62 to the pore complex. Plays a role in mitotic cell cycle progression by regulating centrosome segregation, centriole maturation and spindle orientation. It might be involved in protein recruitment to the centrosome after nuclear breakdown. The sequence is that of Nuclear pore glycoprotein p62 (NUP62) from Homo sapiens (Human).